Here is a 142-residue protein sequence, read N- to C-terminus: Small heat shock protein IbpB (142 aa).

The 112-residue stretch at 26–137 (AGESQSFPPY…AAQRIAISER (112 aa)) folds into the sHSP domain.

Belongs to the small heat shock protein (HSP20) family. Homodimer. Forms homomultimers of about 100-150 subunits at optimal growth temperatures. Conformation changes to oligomers at high temperatures or high ionic concentrations. The decrease in size of the multimers is accompanied by an increase in chaperone activity.

The protein localises to the cytoplasm. Associates with aggregated proteins, together with IbpA, to stabilize and protect them from irreversible denaturation and extensive proteolysis during heat shock and oxidative stress. Aggregated proteins bound to the IbpAB complex are more efficiently refolded and reactivated by the ATP-dependent chaperone systems ClpB and DnaK/DnaJ/GrpE. Its activity is ATP-independent. The chain is Small heat shock protein IbpB from Escherichia coli O7:K1 (strain IAI39 / ExPEC).